A 60-amino-acid polypeptide reads, in one-letter code: Metallothionein B (60 aa).

Residues 1–28 are beta; sequence MDPCECSKTGSCNCGGSCKCSNCACTSC. Cysteine 4, cysteine 6, cysteine 12, cysteine 14, cysteine 18, cysteine 20, cysteine 23, cysteine 25, cysteine 28, cysteine 32, cysteine 33, cysteine 35, cysteine 36, cysteine 40, cysteine 43, cysteine 47, cysteine 49, cysteine 54, cysteine 58, and cysteine 59 together coordinate a divalent metal cation. Residues 29–60 form an alpha region; the sequence is KKSCCPCCPSDCSKCASGCVCKGKTCDTSCCQ.

Belongs to the metallothionein superfamily. Type 1 family.

Functionally, metallothioneins have a high content of cysteine residues that bind various heavy metals. The polypeptide is Metallothionein B (mtb) (Oncorhynchus mykiss (Rainbow trout)).